Here is a 274-residue protein sequence, read N- to C-terminus: NH(3)-dependent NAD(+) synthetase (274 aa).

Gly-46–Ser-53 lines the ATP pocket. Asp-52 provides a ligand contact to Mg(2+). Position 140 (Arg-140) interacts with deamido-NAD(+). Residue Thr-160 participates in ATP binding. Glu-165 contributes to the Mg(2+) binding site. Lys-173 and Asp-180 together coordinate deamido-NAD(+). The ATP site is built by Lys-189 and Thr-211. His-260–Lys-261 contacts deamido-NAD(+).

It belongs to the NAD synthetase family. As to quaternary structure, homodimer.

The enzyme catalyses deamido-NAD(+) + NH4(+) + ATP = AMP + diphosphate + NAD(+) + H(+). Its pathway is cofactor biosynthesis; NAD(+) biosynthesis; NAD(+) from deamido-NAD(+) (ammonia route): step 1/1. Its function is as follows. Catalyzes the ATP-dependent amidation of deamido-NAD to form NAD. Uses ammonia as a nitrogen source. The sequence is that of NH(3)-dependent NAD(+) synthetase from Streptococcus pyogenes serotype M18 (strain MGAS8232).